The sequence spans 30 residues: uncharacterized protein (30 aa).

Residues Y9–F26 form a helical membrane-spanning segment.

It is found in the plastid. The protein resides in the chloroplast membrane. This is an uncharacterized protein from Marchantia polymorpha (Common liverwort).